The primary structure comprises 534 residues: Inorganic phosphate transporter 1-4 (534 aa).

The Cytoplasmic portion of the chain corresponds to 1–24 (MAREQLQVLNALDVAKTQWYHFTA). Residues 25–45 (IIIAGMGFFTDAYDLFCISLV) traverse the membrane as a helical segment. At 46-70 (TKLLGRIYYHVEGAQKPGTLPPNVA) the chain is on the extracellular side. The chain crosses the membrane as a helical span at residues 71 to 91 (AAVNGVAFCGTLAGQLFFGWL). The Cytoplasmic segment spans residues 92 to 99 (GDKLGRKK). A helical membrane pass occupies residues 100 to 120 (VYGMTLMVMVLCSIASGLSFG). Topologically, residues 121–131 (HEPKAVMATLC) are extracellular. The chain crosses the membrane as a helical span at residues 132-152 (FFRFWLGFGIGGDYPLSATIM). At 153 to 161 (SEYANKKTR) the chain is on the cytoplasmic side. A helical transmembrane segment spans residues 162–182 (GAFVSAVFAMQGFGIMAGGIF). The Extracellular portion of the chain corresponds to 183 to 211 (AIIISSAFEAKFPSPAYADDALGSTIPQA). Residues 212–232 (DLVWRIILMAGAIPAAMTYYS) traverse the membrane as a helical segment. Residues 233–293 (RSKMPETARY…GLFSKEFMSR (61 aa)) lie on the Cytoplasmic side of the membrane. The chain crosses the membrane as a helical span at residues 294-314 (HGLHLLGTTSTWFLLDIAFYS). The Extracellular segment spans residues 315–349 (QNLFQKDIFSAIGWIPPAQSMNAIQEVFKIARAQT). The chain crosses the membrane as a helical span at residues 350–370 (LIALCSTVPGYWFTVAFIDVI). Over 371 to 372 (GR) the chain is Cytoplasmic. The chain crosses the membrane as a helical span at residues 373-393 (FAIQMMGFFFMTVFMFALAIP). The Extracellular portion of the chain corresponds to 394-403 (YNHWTHKENR). A helical transmembrane segment spans residues 404–424 (IGFVIMYSLTFFFANFGPNAT). The Cytoplasmic portion of the chain corresponds to 425–442 (TFVVPAEIFPARFRSTCH). A helical membrane pass occupies residues 443–463 (GISAASGKLGAMVGAFGFLYL). Topologically, residues 464–484 (AQNPDKDKTDAGYPPGIGVRN) are extracellular. The helical transmembrane segment at 485-505 (SLIVLGVVNFLGILFTFLVPE) threads the bilayer. Topologically, residues 506 to 534 (SKGKSLEEMSGENEDNENSNNDSRTVPIV) are cytoplasmic. The tract at residues 512–534 (EEMSGENEDNENSNNDSRTVPIV) is disordered. Phosphoserine occurs at positions 524 and 528.

The protein belongs to the major facilitator superfamily. Phosphate:H(+) symporter (TC 2.A.1.9) family. As to quaternary structure, interacts with NLA. In terms of processing, ubiquitinated by NLA. Ubiquitination of PHT1-4 leads to its degradation by the proteasome. As to expression, mostly expressed in roots, in tissues connecting the lateral roots to the primary root. Also present in flowers, in senescing anther filaments and in the abscission zone at the base of siliques. Expressed in hydathodes and axillary buds, and in some senescing leaves. After Pi starvation, localized in all cells of undifferentiated root segments, including root tips and root hairs, and in the epidermis, cortex and stellar regions of mature root segments.

The protein resides in the cell membrane. High-affinity transporter for external inorganic phosphate. Acts as a H(+):phosphate symporter in both low- and high-Pi conditions. Confers sensitivity to arsenate. The protein is Inorganic phosphate transporter 1-4 (PHT1-4) of Arabidopsis thaliana (Mouse-ear cress).